Here is a 92-residue protein sequence, read N- to C-terminus: Small ribosomal subunit protein uS19c (92 aa).

The protein belongs to the universal ribosomal protein uS19 family.

The protein resides in the plastid. It is found in the chloroplast. Its function is as follows. Protein S19 forms a complex with S13 that binds strongly to the 16S ribosomal RNA. The polypeptide is Small ribosomal subunit protein uS19c (Phalaenopsis aphrodite subsp. formosana (Moth orchid)).